Here is a 125-residue protein sequence, read N- to C-terminus: Small ribosomal subunit protein uS12 (125 aa).

Aspartate 89 carries the 3-methylthioaspartic acid modification.

The protein belongs to the universal ribosomal protein uS12 family. In terms of assembly, part of the 30S ribosomal subunit. Contacts proteins S8 and S17. May interact with IF1 in the 30S initiation complex.

Its function is as follows. With S4 and S5 plays an important role in translational accuracy. Interacts with and stabilizes bases of the 16S rRNA that are involved in tRNA selection in the A site and with the mRNA backbone. Located at the interface of the 30S and 50S subunits, it traverses the body of the 30S subunit contacting proteins on the other side and probably holding the rRNA structure together. The combined cluster of proteins S8, S12 and S17 appears to hold together the shoulder and platform of the 30S subunit. This Clostridium novyi (strain NT) protein is Small ribosomal subunit protein uS12.